We begin with the raw amino-acid sequence, 487 residues long: MISSKPRLVVPYGLKTLLEGISRAVLKTNPSDINQFAAAYFQELTMYRGNTTVDIKDLVKQFHQIKVEKWSEGTTPQKKLECLKEPEKTSVESKVPTQMEKSTDTDEDNVTRTEYSDKTTQFPSVYAEPGAEQTEAVGDSSSKPATPKATTPPSSPPPTAVSPEFAYVPADPAQLAAQMLGKVSSIHSDQSDVLMVDVATSMPVVIEEVPSSEAAEDVMVAAPLVCSGKVLEVQVVSQTSVHVDLGSQPKENEAEQSTASSVPLQDEQEPPAYDQAPEVTLQADIEVMSTVHISSVYNDVPVIEGVVYIEQLPEQIVTPFTDQVACLKENEQSPPVSPKSVVEKTTSGISKKSVESVELAQLEENAKYSSVYVEAEAAALLSDTSLKGQPEVPAQLLDAEGAVKIGSEKSLHLEVGITSIVSDNTGQEESGENSVPQEMEGKPVLSGEAAEAVHSGTSVKSSSGPFPPAPEGLTAPEIEPEGEATAE.

The region spanning 12 to 49 is the RIIa domain; sequence YGLKTLLEGISRAVLKTNPSDINQFAAAYFQELTMYRG. 2 stretches are compositionally biased toward basic and acidic residues: residues 78-91 and 101-117; these read KKLE…KTSV and KSTD…EYSD. Disordered regions lie at residues 78–163, 243–271, and 420–487; these read KKLE…AVSP, VDLG…QEPP, and IVSD…ATAE. A compositionally biased stretch (low complexity) spans 140 to 152; the sequence is SSSKPATPKATTP. Polar residues-rich tracts occupy residues 420–436 and 455–464; these read IVSD…NSVP and SGTSVKSSSG. Acidic residues predominate over residues 478-487; the sequence is IEPEGEATAE.

Interacts with FSCB. In terms of processing, phosphorylated on tyrosine residues during in vitro capacitation. Dephosphorylation affects its ability to bind calcium.

The protein resides in the cytoplasm. Its subcellular location is the cytoskeleton. It is found in the cell projection. It localises to the cilium. The protein localises to the flagellum. May function as a regulator of both motility- and head-associated functions such as capacitation and the acrosome reaction. May bind calcium in vitro. This chain is Calcium-binding tyrosine phosphorylation-regulated protein (CABYR), found in Macaca fascicularis (Crab-eating macaque).